A 580-amino-acid chain; its full sequence is Probable inositol transporter 2 (580 aa).

12 helical membrane passes run 36-56, 71-91, 106-126, 129-149, 156-176, 189-209, 275-295, 315-335, 343-363, 452-472, 490-510, and 521-541; these read GIGG…LLYI, EMIV…GGWA, FLFL…LLVV, VFVG…ISEA, GALV…SYLI, WMLG…FTLP, GLIA…NTVM, LLSL…IYFI, LLII…GVFY, FGWF…PGMG, ICGG…AQSF, and WTFL…MVCV.

Belongs to the major facilitator superfamily. Sugar transporter (TC 2.A.1.1) family. In terms of tissue distribution, expressed in the tapetum, but not in pollen grains. Detected in leaf vascular tissue and in roots.

The protein localises to the cell membrane. Its activity is regulated as follows. Inhibited by nickel and to a lesser extent by cobalt. In terms of biological role, plasma membrane inositol-proton symporter. Specific for several inositol epimers, such as myoinositol and scylloinositol. D-chiroinositol, mucoinositol, alloinositol and pinitol are also transported with a lower activity. Not active with galactinol and phytate. This chain is Probable inositol transporter 2 (INT2), found in Arabidopsis thaliana (Mouse-ear cress).